A 118-amino-acid polypeptide reads, in one-letter code: Superoxide-generating NADPH oxidase light chain subunit (118 aa).

4 helical membrane-spanning segments follow: residues 9 to 29 (WAAM…IMGI), 36 to 56 (IAIY…PLSF), 62 to 82 (AIFH…VLCY), and 83 to 103 (FLVP…VFLI).

Belongs to the p22phox family. In terms of assembly, composed of a heavy chain and a light chain.

Its subcellular location is the cell membrane. Functionally, critical component of the membrane-bound oxidase of phagocytes that generates superoxide. The polypeptide is Superoxide-generating NADPH oxidase light chain subunit (cybA) (Dictyostelium discoideum (Social amoeba)).